Here is a 504-residue protein sequence, read N- to C-terminus: Tyrosine-protein kinase HCK (504 aa).

Gly-2 carries the N-myristoyl glycine lipid modification. A lipid anchor (S-palmitoyl cysteine) is attached at Cys-3. Thr-15 is subject to Phosphothreonine. Tyr-30 is modified (phosphotyrosine). Polar residues predominate over residues 34 to 49; it reads PTSTIKPGPNSNNRNT. Residues 34–53 form a disordered region; it reads PTSTIKPGPNSNNRNTPGIG. The 61-residue stretch at 56-116 folds into the SH3 domain; that stretch reads SEDIIVVALY…PSNYVARVDS (61 aa). Positions 122–219 constitute an SH2 domain; that stretch reads WFFKGISRKD…GLCQKLSVPC (98 aa). At Thr-180 the chain carries Phosphothreonine. Residue Tyr-187 is modified to Phosphotyrosine. Positions 240–493 constitute a Protein kinase domain; sequence LKLEKKLGAG…YIQSVLDDFY (254 aa). Residues 246–254 and Lys-268 each bind ATP; that span reads LGAGQFGEV. The Proton acceptor role is filled by Asp-359. Tyr-389 is modified (phosphotyrosine; by autocatalysis). Ser-440 is modified (phosphoserine). Phosphotyrosine is present on Tyr-500.

The protein belongs to the protein kinase superfamily. Tyr protein kinase family. SRC subfamily. In terms of assembly, interacts with ADAM15. Interacts with FASLG. Interacts with ARRB1 and ARRB2. Interacts with FCGR1A; the interaction may be indirect. Interacts with IL6ST. Interacts (via SH3 domain) with ELMO1. Interacts (via SH3 domain) with TP73. Interacts with YAP1. Interacts with ABL1 and ITGB1, and thereby recruits ABL1 to activated ITGB1. Interacts (via SH2 domain) with FLT3 (tyrosine phosphorylated). Interacts with CBL. Interacts with VAV1, WAS and RAPGEF1. Interacts (via SH3 domain) with WDCP. Post-translationally, phosphorylated on several tyrosine residues. Autophosphorylated. Becomes rapidly phosphorylated upon activation of the immunoglobulin receptors FCGR1A and FCGR2A. Phosphorylation at Tyr-389 increases kinase activity. Phosphorylation at Tyr-500 inhibits kinase activity. Kinase activity is not required for phosphorylation at Tyr-500, suggesting that this site may be a target of other kinases. Ubiquitinated by CBL, leading to its degradation via the proteasome. In terms of processing, palmitoylation requires prior myristoylation. Palmitoylation is required for caveolar localization.

The protein localises to the cytoplasmic vesicle. It localises to the secretory vesicle. Its subcellular location is the cytoplasm. It is found in the cytosol. The protein resides in the cell membrane. The protein localises to the membrane. It localises to the caveola. Its subcellular location is the cell junction. It is found in the focal adhesion. The protein resides in the cytoskeleton. The protein localises to the golgi apparatus. It localises to the lysosome. Its subcellular location is the nucleus. It catalyses the reaction L-tyrosyl-[protein] + ATP = O-phospho-L-tyrosyl-[protein] + ADP + H(+). Subject to autoinhibition, mediated by intramolecular interactions involving the SH2 and SH3 domains. Kinase activity is also regulated by phosphorylation at regulatory tyrosine residues. Phosphorylation at Tyr-389 is required for optimal activity. Phosphorylation at Tyr-500 inhibits kinase activity. Non-receptor tyrosine-protein kinase found in hematopoietic cells that transmits signals from cell surface receptors and plays an important role in the regulation of innate immune responses, including neutrophil, monocyte, macrophage and mast cell functions, phagocytosis, cell survival and proliferation, cell adhesion and migration. Acts downstream of receptors that bind the Fc region of immunoglobulins, such as FCGR1A and FCGR2A, but also CSF3R, PLAUR, the receptors for IFNG, IL2, IL6 and IL8, and integrins, such as ITGB1 and ITGB2. During the phagocytic process, mediates mobilization of secretory lysosomes, degranulation, and activation of NADPH oxidase to bring about the respiratory burst. Plays a role in the release of inflammatory molecules. Promotes reorganization of the actin cytoskeleton and actin polymerization, formation of podosomes and cell protrusions. Inhibits TP73-mediated transcription activation and TP73-mediated apoptosis. Phosphorylates CBL in response to activation of immunoglobulin gamma Fc region receptors. Phosphorylates ADAM15, BCR, ELMO1, FCGR2A, GAB1, GAB2, RAPGEF1, STAT5B, TP73, VAV1 and WAS. In Macaca fascicularis (Crab-eating macaque), this protein is Tyrosine-protein kinase HCK (HCK).